A 232-amino-acid chain; its full sequence is Phosphatidylserine decarboxylase proenzyme (232 aa).

Ser190 functions as the Schiff-base intermediate with substrate; via pyruvic acid in the catalytic mechanism. Ser190 is modified (pyruvic acid (Ser); by autocatalysis).

This sequence belongs to the phosphatidylserine decarboxylase family. PSD-A subfamily. In terms of assembly, heterodimer of a large membrane-associated beta subunit and a small pyruvoyl-containing alpha subunit. Pyruvate serves as cofactor. Post-translationally, is synthesized initially as an inactive proenzyme. Formation of the active enzyme involves a self-maturation process in which the active site pyruvoyl group is generated from an internal serine residue via an autocatalytic post-translational modification. Two non-identical subunits are generated from the proenzyme in this reaction, and the pyruvate is formed at the N-terminus of the alpha chain, which is derived from the carboxyl end of the proenzyme. The post-translation cleavage follows an unusual pathway, termed non-hydrolytic serinolysis, in which the side chain hydroxyl group of the serine supplies its oxygen atom to form the C-terminus of the beta chain, while the remainder of the serine residue undergoes an oxidative deamination to produce ammonia and the pyruvoyl prosthetic group on the alpha chain.

Its subcellular location is the cell membrane. The catalysed reaction is a 1,2-diacyl-sn-glycero-3-phospho-L-serine + H(+) = a 1,2-diacyl-sn-glycero-3-phosphoethanolamine + CO2. The protein operates within phospholipid metabolism; phosphatidylethanolamine biosynthesis; phosphatidylethanolamine from CDP-diacylglycerol: step 2/2. Its function is as follows. Catalyzes the formation of phosphatidylethanolamine (PtdEtn) from phosphatidylserine (PtdSer). This Brucella abortus (strain S19) protein is Phosphatidylserine decarboxylase proenzyme.